Here is a 513-residue protein sequence, read N- to C-terminus: ATP synthase subunit alpha (513 aa).

An ATP-binding site is contributed by G169–T176.

Belongs to the ATPase alpha/beta chains family. As to quaternary structure, F-type ATPases have 2 components, CF(1) - the catalytic core - and CF(0) - the membrane proton channel. CF(1) has five subunits: alpha(3), beta(3), gamma(1), delta(1), epsilon(1). CF(0) has three main subunits: a(1), b(2) and c(9-12). The alpha and beta chains form an alternating ring which encloses part of the gamma chain. CF(1) is attached to CF(0) by a central stalk formed by the gamma and epsilon chains, while a peripheral stalk is formed by the delta and b chains.

It is found in the cell inner membrane. The catalysed reaction is ATP + H2O + 4 H(+)(in) = ADP + phosphate + 5 H(+)(out). Produces ATP from ADP in the presence of a proton gradient across the membrane. The alpha chain is a regulatory subunit. This chain is ATP synthase subunit alpha, found in Citrobacter koseri (strain ATCC BAA-895 / CDC 4225-83 / SGSC4696).